Here is a 60-residue protein sequence, read N- to C-terminus: Transcriptional regulator Brz (60 aa).

Residues Cys-8–His-52 form a C4-type; atypical zinc finger.

It belongs to the Brz family.

Functionally, activates transcription of bacteriorhodopsin (bop) and phytoene synthase (crtB1). May interact with DNA or RNA via the zinc finger motif. The polypeptide is Transcriptional regulator Brz (brz) (Halobacterium salinarum (strain ATCC 29341 / DSM 671 / R1)).